The following is a 335-amino-acid chain: Syntaxin-18 (335 aa).

Topologically, residues 1-309 (MAVDITLLFR…EDIREAIKNN (309 aa)) are cytoplasmic. Composition is skewed to basic and acidic residues over residues 168–182 (KLEP…ESTS) and 192–208 (KDSE…EKIL). A disordered region spans residues 168–226 (KLEPEPNTKTRESTSSEKVSQSPSKDSEENPATEERPEKILAETQPELGTWGDGKGEDE). One can recognise a t-SNARE coiled-coil homology domain in the interval 243 to 305 (IGEMNSLFDE…KEGNEDIREA (63 aa)). A helical; Anchor for type IV membrane protein transmembrane segment spans residues 310 to 330 (AGFRVWILFFLVMCSFSLLFL). The Vesicular portion of the chain corresponds to 331–335 (DWYDS).

The protein belongs to the syntaxin family. Component of a SNARE complex consisting of STX18, USE1L, BNIP1/SEC20L, and SEC22B. RINT1/TIP20L and ZW10 are associated with the complex through interaction with BNIP1/SEC20L. Interacts directly with USE1L and BNIP1/SEC20L. As to expression, ubiquitous.

Its subcellular location is the endoplasmic reticulum membrane. The protein localises to the golgi apparatus membrane. Functionally, syntaxin that may be involved in targeting and fusion of Golgi-derived retrograde transport vesicles with the ER. The chain is Syntaxin-18 (STX18) from Homo sapiens (Human).